The chain runs to 598 residues: Elongation factor 4 (598 aa).

Positions 2–183 (KNIRNFCIIA…AIINRVPAPS (182 aa)) constitute a tr-type G domain. Residues 14–19 (DHGKST) and 130–133 (NKVD) contribute to the GTP site.

It belongs to the TRAFAC class translation factor GTPase superfamily. Classic translation factor GTPase family. LepA subfamily.

The protein resides in the cell inner membrane. The catalysed reaction is GTP + H2O = GDP + phosphate + H(+). Functionally, required for accurate and efficient protein synthesis under certain stress conditions. May act as a fidelity factor of the translation reaction, by catalyzing a one-codon backward translocation of tRNAs on improperly translocated ribosomes. Back-translocation proceeds from a post-translocation (POST) complex to a pre-translocation (PRE) complex, thus giving elongation factor G a second chance to translocate the tRNAs correctly. Binds to ribosomes in a GTP-dependent manner. The chain is Elongation factor 4 from Christiangramia forsetii (strain DSM 17595 / CGMCC 1.15422 / KT0803) (Gramella forsetii).